The following is a 337-amino-acid chain: Heat-inducible transcription repressor HrcA (337 aa).

This sequence belongs to the HrcA family.

Functionally, negative regulator of class I heat shock genes (grpE-dnaK-dnaJ and groELS operons). Prevents heat-shock induction of these operons. The polypeptide is Heat-inducible transcription repressor HrcA (Arthrobacter sp. (strain FB24)).